We begin with the raw amino-acid sequence, 1367 residues long: DNA-directed RNA polymerase subunit beta' (1367 aa).

Residues 1–34 (MTSTSPKSRKSSSKRKGSKKKAARSKNVIPPLSK) form a disordered region. The segment covering 7–24 (KSRKSSSKRKGSKKKAAR) has biased composition (basic residues). Zn(2+)-binding residues include C250, C317, C324, and C327. Residues 1306 to 1367 (SVLDDPSDAD…LQEEGLLSDE (62 aa)) form a disordered region. The segment covering 1355–1367 (LEGLQEEGLLSDE) has biased composition (low complexity).

It belongs to the RNA polymerase beta' chain family. RpoC2 subfamily. In terms of assembly, in cyanobacteria the RNAP catalytic core is composed of 2 alpha, 1 beta, 1 beta', 1 gamma and 1 omega subunit. When a sigma factor is associated with the core the holoenzyme is formed, which can initiate transcription. It depends on Zn(2+) as a cofactor.

It catalyses the reaction RNA(n) + a ribonucleoside 5'-triphosphate = RNA(n+1) + diphosphate. In terms of biological role, DNA-dependent RNA polymerase catalyzes the transcription of DNA into RNA using the four ribonucleoside triphosphates as substrates. The sequence is that of DNA-directed RNA polymerase subunit beta' from Prochlorococcus marinus (strain SARG / CCMP1375 / SS120).